Reading from the N-terminus, the 266-residue chain is 3-methyl-2-oxobutanoate hydroxymethyltransferase (266 aa).

Positions 45 and 84 each coordinate Mg(2+). Residues 45–46 (DS), Asp84, and Lys113 each bind 3-methyl-2-oxobutanoate. Glu115 is a binding site for Mg(2+). The active-site Proton acceptor is Glu183.

The protein belongs to the PanB family. Homodecamer; pentamer of dimers. Requires Mg(2+) as cofactor.

It is found in the cytoplasm. The enzyme catalyses 3-methyl-2-oxobutanoate + (6R)-5,10-methylene-5,6,7,8-tetrahydrofolate + H2O = 2-dehydropantoate + (6S)-5,6,7,8-tetrahydrofolate. It participates in cofactor biosynthesis; (R)-pantothenate biosynthesis; (R)-pantoate from 3-methyl-2-oxobutanoate: step 1/2. Catalyzes the reversible reaction in which hydroxymethyl group from 5,10-methylenetetrahydrofolate is transferred onto alpha-ketoisovalerate to form ketopantoate. The polypeptide is 3-methyl-2-oxobutanoate hydroxymethyltransferase (Coxiella burnetii (strain CbuK_Q154) (Coxiella burnetii (strain Q154))).